The sequence spans 124 residues: Small ribosomal subunit protein uS12 (124 aa).

The disordered stretch occupies residues 8 to 30 (IRSARQDTEKQTKSPALKSCPQR). A 3-methylthioaspartic acid modification is found at Asp-89. The tract at residues 103–124 (DTAGVKDRKQSRSKYGAKKPKA) is disordered. Residues 113–124 (SRSKYGAKKPKA) are compositionally biased toward basic residues.

The protein belongs to the universal ribosomal protein uS12 family. Part of the 30S ribosomal subunit. Contacts proteins S8 and S17. May interact with IF1 in the 30S initiation complex.

With S4 and S5 plays an important role in translational accuracy. In terms of biological role, interacts with and stabilizes bases of the 16S rRNA that are involved in tRNA selection in the A site and with the mRNA backbone. Located at the interface of the 30S and 50S subunits, it traverses the body of the 30S subunit contacting proteins on the other side and probably holding the rRNA structure together. The combined cluster of proteins S8, S12 and S17 appears to hold together the shoulder and platform of the 30S subunit. This Trichodesmium erythraeum (strain IMS101) protein is Small ribosomal subunit protein uS12.